A 398-amino-acid chain; its full sequence is Homeobox protein knotted-1-like 1 (398 aa).

3 disordered regions span residues 20–61 (SPIS…HHHQ), 78–102 (NCFR…ASSS), and 241–273 (LNNP…EIDP). Positions 23–56 (SSSNKNDNTSDTNNNNNNNNSSNYGPGYNNTNNN) are enriched in low complexity. The span at 87–102 (PNNNNNPSVKSEASSS) shows a compositional bias: polar residues. An ELK domain is found at 279–299 (ELKNHLLKKYSGYLSSLKQEL). Residues 300–363 (SKKKKKGKLP…NQRKRHWKPS (64 aa)) constitute a DNA-binding region (homeobox; TALE-type).

Belongs to the TALE/KNOX homeobox family. May form heterodimeric complex with the TALE/BELL proteins BEL1, BLH2, BLH8/PNF and BLH9/PNY. Interacts with OFP1, OFP2, OFP4, OFP6 and OFP12. Interacts with CCT7 and CCT8. Interacts with KNATM-B. Binds to AGO10/PNH. Interacts with BZIP30. In terms of tissue distribution, expressed in the vegetative meristem. Present in the base of flower primordia.

It localises to the nucleus. Functionally, may play a role in meristem function, and may be involved in maintaining cells in an undifferentiated, meristematic state, and its expression disappears at the same time the shoot apex undergoes the transition from vegetative to reproductive development. Positive regulator of LATERAL ORGAN BOUNDARIES (LOB). Probably binds to the DNA sequence 5'-TGAC-3'. Able to traffic from the L1 to the L2/L3 layers of the meristem, presumably through plasmodesmata. The chain is Homeobox protein knotted-1-like 1 (KNAT1) from Arabidopsis thaliana (Mouse-ear cress).